Consider the following 300-residue polypeptide: uncharacterized protein (300 aa).

The span at methionine 1–alanine 19 shows a compositional bias: basic and acidic residues. Residues methionine 1–glutamine 20 are disordered.

This is an uncharacterized protein from Orgyia pseudotsugata multicapsid polyhedrosis virus (OpMNPV).